Here is a 335-residue protein sequence, read N- to C-terminus: Biotin synthase (335 aa).

The Radical SAM core domain maps to 50–279; sequence ADIQRAALLS…KARVRLSAGR (230 aa). [4Fe-4S] cluster contacts are provided by C65, C69, and C72. Residues C110, C142, C202, and R274 each contribute to the [2Fe-2S] cluster site.

The protein belongs to the radical SAM superfamily. Biotin synthase family. Homodimer. [4Fe-4S] cluster serves as cofactor. It depends on [2Fe-2S] cluster as a cofactor.

It catalyses the reaction (4R,5S)-dethiobiotin + (sulfur carrier)-SH + 2 reduced [2Fe-2S]-[ferredoxin] + 2 S-adenosyl-L-methionine = (sulfur carrier)-H + biotin + 2 5'-deoxyadenosine + 2 L-methionine + 2 oxidized [2Fe-2S]-[ferredoxin]. Its pathway is cofactor biosynthesis; biotin biosynthesis; biotin from 7,8-diaminononanoate: step 2/2. In terms of biological role, catalyzes the conversion of dethiobiotin (DTB) to biotin by the insertion of a sulfur atom into dethiobiotin via a radical-based mechanism. This is Biotin synthase from Methylorubrum extorquens (strain CM4 / NCIMB 13688) (Methylobacterium extorquens).